Reading from the N-terminus, the 233-residue chain is MIEFGKKAVPRAAMPDTVRSDSGMTAGAMATLAQSAASTHAYYDTTFSRRAMKVLPGEYYVTTEDLMLVTVLGSCVSACVRDKLLGIGGMNHFMLPSRNESESILSPSMRYGTHAMEVLLNQLYRAGARREHLEIKVFGGAAVLAGMSTLDVGERNGKFVLEFLRSEGLPVAAKDLFDVHPRKVYFVPSTGQIMVRKLRSQGSAAELDSEAQYASKLSRSIADKPASRLQLFT.

Belongs to the CheD family.

It carries out the reaction L-glutaminyl-[protein] + H2O = L-glutamyl-[protein] + NH4(+). In terms of biological role, probably deamidates glutamine residues to glutamate on methyl-accepting chemotaxis receptors (MCPs), playing an important role in chemotaxis. The polypeptide is Probable chemoreceptor glutamine deamidase CheD (Ralstonia nicotianae (strain ATCC BAA-1114 / GMI1000) (Ralstonia solanacearum)).